A 349-amino-acid chain; its full sequence is Cytokine response-modifying protein B (349 aa).

An N-terminal signal peptide occupies residues 1 to 22; it reads MKSVLYLYILFLSCIIINGRDA. The tract at residues 1-160 is TNF-binding; it reads MKSVLYLYIL…SPCGFGTYSH (160 aa). TNFR-Cys repeat units follow at residues 31–66 and 67–108; these read KCKDTEYKRHNLCCLSCPPGTYASRLCDSKTNTQCT and PCGS…NRIC. 6 disulfides stabilise this stretch: cysteine 32/cysteine 43, cysteine 44/cysteine 57, cysteine 47/cysteine 65, cysteine 68/cysteine 83, cysteine 86/cysteine 100, and cysteine 90/cysteine 108. Asparagine 101, asparagine 173, asparagine 189, asparagine 215, and asparagine 248 each carry an N-linked (GlcNAc...) asparagine; by host glycan. The tract at residues 161–349 is chemokine-binding; sequence TVSSADKCEP…ITNSKPTRFL (189 aa).

The protein belongs to the orthopoxvirus OPG002 family. As to quaternary structure, homodimer. Interacts with host TNF, LTA, CCL28, CCL25, CXCL12, CXCL13 and CXCl14.

The protein resides in the secreted. In terms of biological role, inhibits host immune defense by binding to host TNF and various chemokines in the extracellular space. Binds host CC chemokines (beta chemokines) and CXC chemokines (alpha chemokines). The polypeptide is Cytokine response-modifying protein B (OPG002) (Variola virus (isolate Human/India/Ind3/1967) (VARV)).